Consider the following 502-residue polypeptide: Arginine decarboxylase (502 aa).

Lys42 carries the N6-(pyridoxal phosphate)lysine modification. 226–236 lines the substrate pocket; the sequence is IDIGGGLGIDY.

It belongs to the Orn/Lys/Arg decarboxylase class-II family. SpeA subfamily. It depends on pyridoxal 5'-phosphate as a cofactor. The cofactor is Mg(2+).

The enzyme catalyses L-arginine + H(+) = agmatine + CO2. It participates in amine and polyamine biosynthesis; agmatine biosynthesis; agmatine from L-arginine: step 1/1. This chain is Arginine decarboxylase, found in Solanum lycopersicum (Tomato).